Here is a 423-residue protein sequence, read N- to C-terminus: SH2 domain-containing protein 5 (423 aa).

The region spanning 28 to 146 (AQYVGLLPCG…LLCRSFQLAY (119 aa)) is the PID domain. The region spanning 296–392 (WAFAGISRPC…LDMGRLNPTY (97 aa)) is the SH2 domain. The disordered stretch occupies residues 394–423 (EQDCGPLGRPPRTLRPLSHAKSEAELQGLG). The segment covering 398 to 410 (GPLGRPPRTLRPL) has biased composition (low complexity).

In terms of assembly, interacts with BCR.

It is found in the postsynaptic density. May be involved in synaptic plasticity regulation through the control of Rac-GTP levels. The polypeptide is SH2 domain-containing protein 5 (Pongo abelii (Sumatran orangutan)).